Here is a 564-residue protein sequence, read N- to C-terminus: 5-hydroxytryptamine receptor 1 (564 aa).

Residues 1–26 form a disordered region; that stretch reads MALSGQDWRRHQSHRQHRNHRTQGNH. Residues 11 to 23 show a composition bias toward basic residues; sequence HQSHRQHRNHRTQ. A helical membrane pass occupies residues 29 to 51; that stretch reads LISTATLTLFVLFLSSWIAYAAG. Tandem repeats lie at residues 89–90, 91–92, 93–94, 95–96, 97–98, 99–100, 101–102, 103–104, and 105–106. A 9 X 2 AA tandem repeats of G-S region spans residues 89-106; that stretch reads GSGSGSGSGSGSGSGSGS. A helical transmembrane segment spans residues 165–188; it reads VSIVLLIVILGTVVGNVLVCIAVC. Over 189–198 the chain is Cytoplasmic; that stretch reads MVRKLRRPCN. Residues 199–222 form a helical membrane-spanning segment; the sequence is YLLVSLALSDLCVALLVMPMALLY. The Extracellular segment spans residues 223–236; the sequence is EVLEKWNFGPLLCD. Cysteine 235 and cysteine 314 form a disulfide bridge. A helical transmembrane segment spans residues 237-258; it reads IWVSFDVLCCTASILNLCAISV. The agonist binding stretch occupies residues 238–247; the sequence is WVSFDVLCCT. Ergotamine is bound by residues aspartate 242 and threonine 247. The DRY motif; important for ligand-induced conformation changes motif lies at 259-261; sequence DRY. Topologically, residues 259-278 are cytoplasmic; it reads DRYLAITKPLEYGVKRTPRR. A helical transmembrane segment spans residues 279–302; the sequence is MMLCVGIVWLAAACISLPPLLILG. Topologically, residues 303–330 are extracellular; sequence NEHEDEEGQPICTVCQNFAYQIYATLGS. Residues 331-353 form a helical membrane-spanning segment; it reads FYIPLSVMLFVYYQIFRAARRIV. Over 354–454 the chain is Cytoplasmic; sequence LEEKRAQTHL…QLAKEKKAST (101 aa). The interval 367 to 396 is disordered; that stretch reads LNGTGSPSAPQAPPLGHTELASSGNGQRHS. Over residues 386–396 the composition is skewed to polar residues; it reads LASSGNGQRHS. A helical transmembrane segment spans residues 455–476; it reads TLGIIMSAFTVCWLPFFILALI. Topologically, residues 477–487 are extracellular; it reads RPFETMHVPAS. Residues 488–510 form a helical membrane-spanning segment; sequence LSSLFLWLGYANSLLNPIIYATL. The NPxxY motif; important for ligand-induced conformation changes and signaling signature appears at 503–507; that stretch reads NPIIY. The Cytoplasmic portion of the chain corresponds to 511-564; the sequence is NRDFRKPFQEILYFRCSSLNTMMRENYYQDQYGEPPSQRVMLGDERHGARESFL.

This sequence belongs to the G-protein coupled receptor 1 family. 5-hydroxytryptamine receptor subfamily. In terms of tissue distribution, expressed predominantly in adult heads.

It is found in the cell membrane. Functionally, G-protein coupled receptor for 5-hydroxytryptamine (serotonin). Also functions as a receptor for various alkaloids. Ligand binding causes a conformation change that triggers signaling via guanine nucleotide-binding proteins (G proteins) and modulates the activity of down-stream effectors, such as adenylate cyclase. Signaling activates adenylate cyclase activity. This Drosophila melanogaster (Fruit fly) protein is 5-hydroxytryptamine receptor 1 (5-HT7).